Here is a 173-residue protein sequence, read N- to C-terminus: Transcription factor E (173 aa).

The 84-residue stretch at 3–86 (DDPLVKSLLT…SWKFEEQEVI (84 aa)) folds into the HTH TFE/IIEalpha-type domain.

Belongs to the TFE family. In terms of assembly, monomer. Interaction with RNA polymerase subunits RpoF and RpoE is necessary for Tfe stimulatory transcription activity. Able to interact with Tbp and RNA polymerase in the absence of DNA promoter. Interacts both with the preinitiation and elongation complexes.

Transcription factor that plays a role in the activation of archaeal genes transcribed by RNA polymerase. Facilitates transcription initiation by enhancing TATA-box recognition by TATA-box-binding protein (Tbp), and transcription factor B (Tfb) and RNA polymerase recruitment. Not absolutely required for transcription in vitro, but particularly important in cases where Tbp or Tfb function is not optimal. It dynamically alters the nucleic acid-binding properties of RNA polymerases by stabilizing the initiation complex and destabilizing elongation complexes. Seems to translocate with the RNA polymerase following initiation and acts by binding to the non template strand of the transcription bubble in elongation complexes. This Methanobrevibacter smithii (strain ATCC 35061 / DSM 861 / OCM 144 / PS) protein is Transcription factor E.